Reading from the N-terminus, the 287-residue chain is Cell wall-binding protein YocH (287 aa).

Positions 1 to 25 (MKKTIMSFVAVAALSTTAFGAHASA) are cleaved as a signal peptide. 2 consecutive LysM domains span residues 26–69 (KEIT…KLTI) and 78–121 (GQYT…TLSV). Residues 130 to 143 (TATENAQTNAPQAA) are compositionally biased toward low complexity. The segment at 130-193 (TATENAQTNA…SNTNNQEASK (64 aa)) is disordered. The span at 165-181 (QETKAEAETSVNTEEKA) shows a compositional bias: basic and acidic residues. Positions 182–193 (VQSNTNNQEASK) are enriched in polar residues.

The protein resides in the secreted. Its subcellular location is the cell wall. This chain is Cell wall-binding protein YocH (yocH), found in Bacillus subtilis (strain 168).